The primary structure comprises 300 residues: tRNA pseudouridine synthase B (300 aa).

The active-site Nucleophile is the Asp-38.

Belongs to the pseudouridine synthase TruB family. Type 1 subfamily.

The enzyme catalyses uridine(55) in tRNA = pseudouridine(55) in tRNA. Its function is as follows. Responsible for synthesis of pseudouridine from uracil-55 in the psi GC loop of transfer RNAs. The chain is tRNA pseudouridine synthase B from Dehalococcoides mccartyi (strain ATCC BAA-2266 / KCTC 15142 / 195) (Dehalococcoides ethenogenes (strain 195)).